Reading from the N-terminus, the 146-residue chain is Leghemoglobin Lb120-34 (146 aa).

One can recognise a Globin domain in the interval 2–146 (GFTEKQEALV…LASAIKKAMN (145 aa)). Residues Tyr-24 and Tyr-29 each carry the nitrated tyrosine modification. Position 44 (Ser-44) interacts with heme b. Ser-44 is modified (phosphoserine). An O2-binding site is contributed by His-61. Residues Lys-64, His-93, and Lys-96 each contribute to the heme b site. Tyr-134 is modified (nitrated tyrosine).

This sequence belongs to the plant globin family. As to quaternary structure, monomer. Nitrated in effective nodules and particularly in hypoxic conditions; this mechanism may play a protective role in the symbiosis by buffering toxic peroxynitrite NO(2)(-). Nitration level decrease during nodule senescence. Post-translationally, phosphorylation at Ser-44 disrupts the molecular environment of its porphyrin ring oxygen binding pocket, thus leading to a reduced oxygen consumption and to the delivery of oxygen O(2) to symbiosomes. Root nodules.

It localises to the cytoplasm. It is found in the cytosol. The protein localises to the nucleus. Its function is as follows. Leghemoglobin that reversibly binds oxygen O(2) through a pentacoordinated heme iron. In root nodules, facilitates the diffusion of oxygen to the bacteroids while preventing the bacterial nitrogenase from being inactivated by buffering dioxygen, nitric oxide and carbon monoxide, and promoting the formation of reactive oxygen species (ROS, e.g. H(2)O(2)). This role is essential for symbiotic nitrogen fixation (SNF). This chain is Leghemoglobin Lb120-34, found in Pisum sativum (Garden pea).